Reading from the N-terminus, the 311-residue chain is Haloalkane dehalogenase (311 aa).

The region spanning 30–148 is the AB hydrolase-1 domain; sequence AIVFQHGNPS…WDDFPDEVAQ (119 aa). Residue Asp107 is the Nucleophile of the active site. The Proton donor role is filled by Glu131. His272 serves as the catalytic Proton acceptor.

Belongs to the haloalkane dehalogenase family. Type 2 subfamily. Monomer.

It carries out the reaction 1-haloalkane + H2O = a halide anion + a primary alcohol + H(+). In terms of biological role, catalyzes hydrolytic cleavage of carbon-halogen bonds in halogenated aliphatic compounds, leading to the formation of the corresponding primary alcohols, halide ions and protons. This Mycolicibacterium smegmatis (strain ATCC 700084 / mc(2)155) (Mycobacterium smegmatis) protein is Haloalkane dehalogenase.